A 1043-amino-acid chain; its full sequence is Isoleucine--tRNA ligase (1043 aa).

Residues Pro48–His58 carry the 'HIGH' region motif. The 'KMSKS' region signature appears at Lys591–Arg595. Residue Lys594 coordinates ATP.

The protein belongs to the class-I aminoacyl-tRNA synthetase family. IleS type 2 subfamily. As to quaternary structure, monomer. The cofactor is Zn(2+).

Its subcellular location is the cytoplasm. The enzyme catalyses tRNA(Ile) + L-isoleucine + ATP = L-isoleucyl-tRNA(Ile) + AMP + diphosphate. In terms of biological role, catalyzes the attachment of isoleucine to tRNA(Ile). As IleRS can inadvertently accommodate and process structurally similar amino acids such as valine, to avoid such errors it has two additional distinct tRNA(Ile)-dependent editing activities. One activity is designated as 'pretransfer' editing and involves the hydrolysis of activated Val-AMP. The other activity is designated 'posttransfer' editing and involves deacylation of mischarged Val-tRNA(Ile). This chain is Isoleucine--tRNA ligase, found in Chlamydia pneumoniae (Chlamydophila pneumoniae).